A 993-amino-acid polypeptide reads, in one-letter code: Receptor-type tyrosine-protein kinase FLT3 (993 aa).

The first 26 residues, 1–26 (MPALARDGGQLPLLVVFSAMIFGTIT), serve as a signal peptide directing secretion. The Extracellular portion of the chain corresponds to 27-543 (NQDLPVIKCV…PFPFIQDNIS (517 aa)). A disulfide bridge links Cys35 with Cys65. Residues Asn43 and Asn100 are each glycosylated (N-linked (GlcNAc...) asparagine). A disulfide bridge links Cys103 with Cys114. Residue Asn151 is glycosylated (N-linked (GlcNAc...) asparagine). Intrachain disulfides connect Cys199–Cys206, Cys232–Cys241, and Cys272–Cys330. The region spanning 253–343 (PQTTLPQLFL…KHPSQSALVT (91 aa)) is the Ig-like C2-type domain. N-linked (GlcNAc...) asparagine glycosylation is found at Asn306, Asn323, Asn351, and Asn354. Cystine bridges form between Cys368/Cys407 and Cys381/Cys392. Residues Asn473, Asn502, and Asn541 are each glycosylated (N-linked (GlcNAc...) asparagine). A helical transmembrane segment spans residues 544 to 563 (FYATIGVCLLFIVVLTLLIC). At 564 to 993 (HKYKKQFRYE…LSPQAQVEDS (430 aa)) the chain is on the cytoplasmic side. Residue Tyr572 is modified to Phosphotyrosine. Ser574 is subject to Phosphoserine. Phosphotyrosine; by autocatalysis is present on residues Tyr589, Tyr591, and Tyr599. Residues 591 to 597 (YVDFREY) are important for normal regulation of the kinase activity and for maintaining the kinase in an inactive state in the absence of bound ligand. Residues 610 to 943 (LEFGKVLGSG…PSFPNLTSFL (334 aa)) enclose the Protein kinase domain. Residues 616-624 (LGSGAFGKV) and Lys644 each bind ATP. The residue at position 726 (Tyr726) is a Phosphotyrosine; by autocatalysis. Ser759 carries the post-translational modification Phosphoserine. 2 positions are modified to phosphotyrosine: Tyr768 and Tyr793. The Proton acceptor role is filled by Asp811. Phosphotyrosine; by autocatalysis is present on residues Tyr842, Tyr955, and Tyr969. Phosphoserine is present on Ser993.

It belongs to the protein kinase superfamily. Tyr protein kinase family. CSF-1/PDGF receptor subfamily. As to quaternary structure, monomer in the absence of bound FLT3LG. Homodimer in the presence of bound FLT3LG. Interacts with FIZ1 following ligand activation. Interacts with FES, FER, LYN, FGR, HCK, SRC and GRB2. Interacts with PTPRJ/DEP-1 and PTPN11/SHP2. Interacts with RNF115 and RNF126. (Microbial infection) Interacts with human cytomegalovirus protein UL7. Post-translationally, N-glycosylated, contains complex N-glycans with sialic acid. Autophosphorylated on several tyrosine residues in response to FLT3LG binding. FLT3LG binding also increases phosphorylation of mutant kinases that are constitutively activated. Dephosphorylated by PTPRJ/DEP-1, PTPN1, PTPN6/SHP-1, and to a lesser degree by PTPN12. Dephosphorylation is important for export from the endoplasmic reticulum and location at the cell membrane. In terms of processing, rapidly ubiquitinated by UBE2L6 and the E3 ubiquitin-protein ligase SIAH1 after autophosphorylation, leading to its proteasomal degradation. As to expression, detected in bone marrow, in hematopoietic stem cells, in myeloid progenitor cells and in granulocyte/macrophage progenitor cells (at protein level). Detected in bone marrow, liver, thymus, spleen and lymph node, and at low levels in kidney and pancreas. Highly expressed in T-cell leukemia.

The protein localises to the membrane. The protein resides in the endoplasmic reticulum lumen. The catalysed reaction is L-tyrosyl-[protein] + ATP = O-phospho-L-tyrosyl-[protein] + ADP + H(+). Present in an inactive conformation in the absence of bound ligand. FLT3LG binding leads to dimerization and activation by autophosphorylation. Its function is as follows. Tyrosine-protein kinase that acts as a cell-surface receptor for the cytokine FLT3LG and regulates differentiation, proliferation and survival of hematopoietic progenitor cells and of dendritic cells. Promotes phosphorylation of SHC1 and AKT1, and activation of the downstream effector MTOR. Promotes activation of RAS signaling and phosphorylation of downstream kinases, including MAPK1/ERK2 and/or MAPK3/ERK1. Promotes phosphorylation of FES, FER, PTPN6/SHP, PTPN11/SHP-2, PLCG1, and STAT5A and/or STAT5B. Activation of wild-type FLT3 causes only marginal activation of STAT5A or STAT5B. Mutations that cause constitutive kinase activity promote cell proliferation and resistance to apoptosis via the activation of multiple signaling pathways. The chain is Receptor-type tyrosine-protein kinase FLT3 (FLT3) from Homo sapiens (Human).